The primary structure comprises 298 residues: ATP phosphoribosyltransferase (298 aa).

This sequence belongs to the ATP phosphoribosyltransferase family.

It is found in the cytoplasm. It catalyses the reaction 1-(5-phospho-beta-D-ribosyl)-ATP + diphosphate = 5-phospho-alpha-D-ribose 1-diphosphate + ATP. The protein operates within amino-acid biosynthesis; L-histidine biosynthesis; L-histidine from 5-phospho-alpha-D-ribose 1-diphosphate: step 1/9. Functionally, catalyzes the condensation of ATP and 5-phosphoribose 1-diphosphate to form N'-(5'-phosphoribosyl)-ATP (PR-ATP). Has a crucial role in the pathway because the rate of histidine biosynthesis seems to be controlled primarily by regulation of the enzymatic activity. This chain is ATP phosphoribosyltransferase (HIS1), found in Candida albicans (strain SC5314 / ATCC MYA-2876) (Yeast).